The primary structure comprises 334 residues: Tyrosine-protein kinase SRK3 (334 aa).

The SH2 domain occupies 1–42 (IRTLDDGGFYMANRISFPTLQNLVSHYMMDADGLAQRLSRPC). Residues 66–321 (IQLQRKLGQG…LKNLLEDYYV (256 aa)) form the Protein kinase domain. Residues 72–80 (LGQGNFGEV) and Lys-94 each bind ATP. Residue Asp-186 is the Proton acceptor of the active site.

The protein belongs to the protein kinase superfamily. Tyr protein kinase family.

Its subcellular location is the cytoplasm. It carries out the reaction L-tyrosyl-[protein] + ATP = O-phospho-L-tyrosyl-[protein] + ADP + H(+). In Spongilla lacustris (Freshwater sponge), this protein is Tyrosine-protein kinase SRK3 (SRK3).